The chain runs to 447 residues: N-succinylarginine dihydrolase (447 aa).

Residues 19-28 (AGLSFGNEAS), N110, and 137-138 (HR) contribute to the substrate site. The active site involves E174. R214 is a substrate binding site. H250 is a catalytic residue. Substrate contacts are provided by D252 and N365. The Nucleophile role is filled by C371.

The protein belongs to the succinylarginine dihydrolase family. Homodimer.

It carries out the reaction N(2)-succinyl-L-arginine + 2 H2O + 2 H(+) = N(2)-succinyl-L-ornithine + 2 NH4(+) + CO2. The protein operates within amino-acid degradation; L-arginine degradation via AST pathway; L-glutamate and succinate from L-arginine: step 2/5. In terms of biological role, catalyzes the hydrolysis of N(2)-succinylarginine into N(2)-succinylornithine, ammonia and CO(2). The sequence is that of N-succinylarginine dihydrolase from Acinetobacter baumannii (strain ATCC 17978 / DSM 105126 / CIP 53.77 / LMG 1025 / NCDC KC755 / 5377).